A 30-amino-acid polypeptide reads, in one-letter code: Dendrotoxin A (30 aa).

Cys-3 and Cys-22 are joined by a disulfide.

The protein belongs to the three-finger toxin family. Short-chain subfamily. Acn-esterase inhibitor sub-subfamily. In terms of processing, contains 4 disulfide bonds. In terms of tissue distribution, expressed by the venom gland.

It localises to the secreted. In terms of biological role, inhibits acetylcholinesterase. Has been described to inhibit both the slowly and the rapidly inactivating phases of potassium efflux. The sequence is that of Dendrotoxin A from Dendroaspis angusticeps (Eastern green mamba).